The primary structure comprises 72 residues: DNA-directed RNA polymerase subunit omega (72 aa).

This sequence belongs to the RNA polymerase subunit omega family. As to quaternary structure, the RNAP catalytic core consists of 2 alpha, 1 beta, 1 beta' and 1 omega subunit. When a sigma factor is associated with the core the holoenzyme is formed, which can initiate transcription.

It catalyses the reaction RNA(n) + a ribonucleoside 5'-triphosphate = RNA(n+1) + diphosphate. In terms of biological role, promotes RNA polymerase assembly. Latches the N- and C-terminal regions of the beta' subunit thereby facilitating its interaction with the beta and alpha subunits. In Laribacter hongkongensis (strain HLHK9), this protein is DNA-directed RNA polymerase subunit omega.